The chain runs to 166 residues: Regulatory protein RecX (166 aa).

It belongs to the RecX family.

Its subcellular location is the cytoplasm. In terms of biological role, modulates RecA activity. The sequence is that of Regulatory protein RecX from Shigella boydii serotype 18 (strain CDC 3083-94 / BS512).